A 216-amino-acid chain; its full sequence is ATP synthase subunit C lysine N-methyltransferase (216 aa).

An N-acetylmethionine modification is found at Met-1. The segment covering Met-1–Gln-12 has biased composition (basic and acidic residues). The tract at residues Met-1 to Ser-25 is disordered. The helical transmembrane segment at Trp-31–Thr-50 threads the bilayer. A required for mitochondrial location region spans residues Thr-51 to Gly-85.

The protein belongs to the ANT/ATPSC lysine N-methyltransferase family.

The protein resides in the mitochondrion membrane. The enzyme catalyses L-lysyl-[protein] + 3 S-adenosyl-L-methionine = N(6),N(6),N(6)-trimethyl-L-lysyl-[protein] + 3 S-adenosyl-L-homocysteine + 3 H(+). In terms of biological role, mitochondrial protein-lysine N-methyltransferase that trimethylates ATP synthase subunit C, ATP5MC1 and ATP5MC2. Trimethylation is required for proper incorporation of the C subunit into the ATP synthase complex and mitochondrial respiration. Promotes chronic pain. Involved in persistent inflammatory and neuropathic pain: methyltransferase activity in the mitochondria of sensory neurons promotes chronic pain via a pathway that depends on the production of reactive oxygen species (ROS) and on the engagement of spinal cord microglia. This chain is ATP synthase subunit C lysine N-methyltransferase (Atpsckmt), found in Rattus norvegicus (Rat).